A 241-amino-acid polypeptide reads, in one-letter code: Antimicrobial ginkbilobin-2-like protein (241 aa).

Positions 1–23 (MLSSKYISVSFLLLSLSLHAVNC) are cleaved as a signal peptide. 2 Gnk2-homologous domains span residues 25–127 (DPLY…NIDF) and 133–238 (NKNK…LYPF). Disulfide bonds link Cys81/Cys90, Cys93/Cys118, Cys192/Cys201, and Cys204/Cys229. An N-linked (GlcNAc...) asparagine glycan is attached at Asn89.

It belongs to the cysteine-rich repeat secretory protein family.

It is found in the secreted. In terms of biological role, possesses antimicrobial activity toward the oomycete Phytophthora cinnamomi (ink disease agent), thus reducing its growth rate and confering an increased resistance to the plant. The sequence is that of Antimicrobial ginkbilobin-2-like protein from Castanea crenata (Japanese chestnut).